We begin with the raw amino-acid sequence, 861 residues long: FO synthase (861 aa).

2 Radical SAM core domains span residues 69–319 and 528–763; these read ITYS…LQAP and VTYI…LLHP. Positions 70–401 are cofG-like; that stretch reads TYSKSVFIPL…PRLLPHVRAL (332 aa). Cys83, Cys87, Cys90, Cys542, Cys546, and Cys549 together coordinate [4Fe-4S] cluster. A cofH-like region spans residues 505–838; that stretch reads DGPALDALTR…KPRTTLYGEV (334 aa).

The protein in the N-terminal section; belongs to the radical SAM superfamily. CofG family. It in the C-terminal section; belongs to the radical SAM superfamily. CofH family. It depends on [4Fe-4S] cluster as a cofactor.

It catalyses the reaction 5-amino-6-(D-ribitylamino)uracil + L-tyrosine + S-adenosyl-L-methionine = 5-amino-5-(4-hydroxybenzyl)-6-(D-ribitylimino)-5,6-dihydrouracil + 2-iminoacetate + 5'-deoxyadenosine + L-methionine + H(+). The enzyme catalyses 5-amino-5-(4-hydroxybenzyl)-6-(D-ribitylimino)-5,6-dihydrouracil + S-adenosyl-L-methionine = 7,8-didemethyl-8-hydroxy-5-deazariboflavin + 5'-deoxyadenosine + L-methionine + NH4(+) + H(+). It functions in the pathway cofactor biosynthesis; coenzyme F0 biosynthesis. Functionally, catalyzes the radical-mediated synthesis of 7,8-didemethyl-8-hydroxy-5-deazariboflavin (FO) from 5-amino-6-(D-ribitylamino)uracil and L-tyrosine. In Streptomyces avermitilis (strain ATCC 31267 / DSM 46492 / JCM 5070 / NBRC 14893 / NCIMB 12804 / NRRL 8165 / MA-4680), this protein is FO synthase (fbiC).